Here is a 62-residue protein sequence, read N- to C-terminus: Translational regulator CsrA (62 aa).

It belongs to the CsrA/RsmA family. In terms of assembly, homodimer; the beta-strands of each monomer intercalate to form a hydrophobic core, while the alpha-helices form wings that extend away from the core.

It is found in the cytoplasm. Functionally, a key translational regulator that binds mRNA to regulate translation initiation and/or mRNA stability. Mediates global changes in gene expression, shifting from rapid growth to stress survival by linking envelope stress, the stringent response and the catabolite repression systems. Usually binds in the 5'-UTR; binding at or near the Shine-Dalgarno sequence prevents ribosome-binding, repressing translation, binding elsewhere in the 5'-UTR can activate translation and/or stabilize the mRNA. Its function is antagonized by small RNA(s). The chain is Translational regulator CsrA from Haemophilus ducreyi (strain 35000HP / ATCC 700724).